The primary structure comprises 135 residues: Probable histone H2A.8 (135 aa).

The protein belongs to the histone H2A family. As to quaternary structure, the nucleosome is a histone octamer containing two molecules each of H2A, H2B, H3 and H4 assembled in one H3-H4 heterotetramer and two H2A-H2B heterodimers. The octamer wraps approximately 147 bp of DNA.

It is found in the nucleus. It localises to the chromosome. In terms of biological role, core component of nucleosome. Nucleosomes wrap and compact DNA into chromatin, limiting DNA accessibility to the cellular machineries which require DNA as a template. Histones thereby play a central role in transcription regulation, DNA repair, DNA replication and chromosomal stability. DNA accessibility is regulated via a complex set of post-translational modifications of histones, also called histone code, and nucleosome remodeling. The protein is Probable histone H2A.8 of Oryza sativa subsp. indica (Rice).